Consider the following 275-residue polypeptide: MSAPLYVINVCDHETSAERVFGMLIERHNSFEDYPIDNDAFVNSLIVNGFRYTHVDDAVVCEYCGVVIKNWRENDVVEFVHATLSPYCVYANKIAQNEQFAEDISTDAVVVSPGKPRCVYNRLAHPSARRATFDHWPAALNALTHDIAEAGMFHTMLGDETACFFCDCRVRDWLPGDDPWQRHALANPQCYFVVCVKGDGFCNSERRAETAPGEPAPAFAGSEALECKVCLERQRDAVLLPCRHFCVCMQCYFALDGKCPTCRQDVADFIKIFVT.

2 BIR repeats span residues 24–91 (LIER…CVYA) and 126–193 (PSAR…CYFV). Zn(2+)-binding residues include cysteine 163, cysteine 166, histidine 183, and cysteine 190. The RING-type zinc-finger motif lies at 227–263 (CKVCLERQRDAVLLPCRHFCVCMQCYFALDGKCPTCR).

Acts by blocking cellular apoptosis rather than by preventing viral stimulation of apoptosis. This Orgyia pseudotsugata (Douglas-fir tussock moth) protein is Apoptosis inhibitor 1 (IAP1).